Consider the following 118-residue polypeptide: Putative pterin-4-alpha-carbinolamine dehydratase (118 aa).

The protein belongs to the pterin-4-alpha-carbinolamine dehydratase family.

The enzyme catalyses (4aS,6R)-4a-hydroxy-L-erythro-5,6,7,8-tetrahydrobiopterin = (6R)-L-erythro-6,7-dihydrobiopterin + H2O. The sequence is that of Putative pterin-4-alpha-carbinolamine dehydratase (phhB) from Xanthomonas axonopodis pv. citri (strain 306).